Consider the following 511-residue polypeptide: Sodium/hydrogen exchanger 9B1 (511 aa).

Positions 1 to 10 (MHTTESKDEH) are enriched in basic and acidic residues. Residues 1–41 (MHTTESKDEHLEDENFQTSTTPQSLIDPNSTAHEETKTVIS) form a disordered region. The segment covering 16–31 (FQTSTTPQSLIDPNST) has biased composition (polar residues). 13 helical membrane-spanning segments follow: residues 67 to 87 (IITN…VLGS), 95 to 115 (LFGL…LQLI), 116 to 136 (RIPL…GFTI), 152 to 172 (WSSI…GLGL), 187 to 207 (LAVG…HFIM), 215 to 235 (FLLG…SMMV), 260 to 280 (VLAI…GGIV), 284 to 304 (IASI…GFFV), 337 to 357 (IGLH…AGTK), 368 to 388 (IITN…GAEV), 398 to 418 (IGIF…VTYI), 431 to 451 (IFIA…GPLV), and 472 to 492 (VAFL…GILG).

The protein belongs to the monovalent cation:proton antiporter 1 (CPA1) transporter (TC 2.A.36) family.

It localises to the cell projection. The protein resides in the cilium. The protein localises to the flagellum membrane. Functionally, sperm-specific Na(+)/H(+) exchanger involved in intracellular pH regulation of spermatozoa. Involved in sperm motility and fertility. The chain is Sodium/hydrogen exchanger 9B1 (SLC9B1) from Macaca fascicularis (Crab-eating macaque).